A 322-amino-acid chain; its full sequence is tRNA U34 carboxymethyltransferase (322 aa).

Residues lysine 90, tryptophan 104, lysine 109, glycine 129, 151–153 (DPT), 180–181 (IE), methionine 195, tyrosine 199, and arginine 314 each bind carboxy-S-adenosyl-L-methionine.

It belongs to the class I-like SAM-binding methyltransferase superfamily. CmoB family. As to quaternary structure, homotetramer.

The enzyme catalyses carboxy-S-adenosyl-L-methionine + 5-hydroxyuridine(34) in tRNA = 5-carboxymethoxyuridine(34) in tRNA + S-adenosyl-L-homocysteine + H(+). Catalyzes carboxymethyl transfer from carboxy-S-adenosyl-L-methionine (Cx-SAM) to 5-hydroxyuridine (ho5U) to form 5-carboxymethoxyuridine (cmo5U) at position 34 in tRNAs. This chain is tRNA U34 carboxymethyltransferase, found in Citrobacter koseri (strain ATCC BAA-895 / CDC 4225-83 / SGSC4696).